We begin with the raw amino-acid sequence, 808 residues long: Sucrose synthase (808 aa).

Residues methionine 271–threonine 753 are GT-B glycosyltransferase.

It belongs to the glycosyltransferase 1 family. In terms of assembly, probably a homotetramer.

It carries out the reaction an NDP-alpha-D-glucose + D-fructose = a ribonucleoside 5'-diphosphate + sucrose + H(+). The catalysed reaction is ADP-alpha-D-glucose + D-fructose = sucrose + ADP + H(+). Catalyzes the reversible conversion of sucrose and a nucleotide disphosphate (NDP) into fructose and NDP-glucose; although the reaction is freely reversible in vitro, the physiological reaction seems to be sucrose cleavage. Unlike characterized plant enzymes prefers ADP as a cosubstrate, whereas plants prefer UDP. Its preference for ADP over UDP suggests it may directly link sucrose and glycogen metabolism. This chain is Sucrose synthase, found in Thermosynechococcus vestitus (strain NIES-2133 / IAM M-273 / BP-1).